Consider the following 434-residue polypeptide: Methylenetetrahydrofolate--tRNA-(uracil-5-)-methyltransferase TrmFO (434 aa).

9 to 14 (GAGLAG) serves as a coordination point for FAD.

The protein belongs to the MnmG family. TrmFO subfamily. FAD serves as cofactor.

The protein resides in the cytoplasm. It catalyses the reaction uridine(54) in tRNA + (6R)-5,10-methylene-5,6,7,8-tetrahydrofolate + NADH + H(+) = 5-methyluridine(54) in tRNA + (6S)-5,6,7,8-tetrahydrofolate + NAD(+). The catalysed reaction is uridine(54) in tRNA + (6R)-5,10-methylene-5,6,7,8-tetrahydrofolate + NADPH + H(+) = 5-methyluridine(54) in tRNA + (6S)-5,6,7,8-tetrahydrofolate + NADP(+). Its function is as follows. Catalyzes the folate-dependent formation of 5-methyl-uridine at position 54 (M-5-U54) in all tRNAs. In Bacillus pumilus (strain SAFR-032), this protein is Methylenetetrahydrofolate--tRNA-(uracil-5-)-methyltransferase TrmFO.